The chain runs to 145 residues: 5-hydroxymethyl-dUMP N-hydrolase (145 aa).

Residues G7, I9, R10, G11, S79, G81, E85, and S109 each coordinate 5-hydroxymethyl-dUMP.

The protein belongs to the 2'-deoxynucleoside 5'-phosphate N-hydrolase 1 family. As to quaternary structure, monomer and homodimer.

The protein localises to the cytoplasm. Its subcellular location is the nucleus. The catalysed reaction is 5-hydroxymethyl-dUMP + H2O = 5-hydroxymethyluracil + 2-deoxy-D-ribose 5-phosphate. In terms of biological role, part of a nucleotide salvage pathway that eliminates epigenetically modified 5-hydroxymethyl-dCMP (hmdCMP) in a two-step process entailing deamination to cytotoxic 5-hydroxymethyl-dUMP (hmdUMP), followed by its hydrolysis into 5-hydroxymethyluracil (hmU) and 2-deoxy-D-ribose 5-phosphate (deoxyribosephosphate). Catalyzes the second step in that pathway, the hydrolysis of the N-glycosidic bond in hmdUMP, degrading this cytotoxic nucleotide to avoid its genomic integration. The sequence is that of 5-hydroxymethyl-dUMP N-hydrolase from Esox lucius (Northern pike).